Here is a 308-residue protein sequence, read N- to C-terminus: MNFQQLRFVREAVRQNMNLTEVANVLYTSQSGVSKQIKDLEDELGVDIFIRRGKRLTGLTEPGKAVHQLIERMLLDAENLRRVARQFADQDSGHLVVATTHTQARYALPKVIRQFTDVFPKVHLALRQGSPQQIAQMILNGEADLGISTEALDRYPDIVTFPCYSWHHTVVVPKGHPLVGRENLTLEEIAEYPIITYDQDFTGRSHIDQAFTQAGAVPDVVLTAIDADVIKTYVELGMGIGVVAAMAYDPQRDTGLVALDTQHLFEASTTRVGLRKGAFLRAYAYRLIEMFAPHLNEAEIAGLLREAV.

Residues 1–59 form the HTH lysR-type domain; it reads MNFQQLRFVREAVRQNMNLTEVANVLYTSQSGVSKQIKDLEDELGVDIFIRRGKRLTGL. The H-T-H motif DNA-binding region spans 19–38; sequence LTEVANVLYTSQSGVSKQIK.

It belongs to the LysR transcriptional regulatory family.

Its function is as follows. Transcriptional regulator that is essential for the utilization of a number of organic sulfur sources of either environmental or human origin. Required for aliphatic sulfonate utilization. Binds to DNA at target promoter regions. Targets include the ssuDBC operon, the tauABC operon, three tauD-type genes and atsA. This Burkholderia cenocepacia (strain ATCC BAA-245 / DSM 16553 / LMG 16656 / NCTC 13227 / J2315 / CF5610) (Burkholderia cepacia (strain J2315)) protein is HTH-type transcriptional regulator SsuR.